The primary structure comprises 315 residues: 1-aminocyclopropane-1-carboxylate oxidase 1 (315 aa).

Residues 153 to 253 (PNFGTKVSNY…RMSLASFYNP (101 aa)) enclose the Fe2OG dioxygenase domain. Fe cation contacts are provided by H177, D179, and H234.

The protein belongs to the iron/ascorbate-dependent oxidoreductase family. Fe cation serves as cofactor. Predominantly expressed in the petals and the stigma and style.

It catalyses the reaction 1-aminocyclopropane-1-carboxylate + L-ascorbate + O2 = ethene + L-dehydroascorbate + hydrogen cyanide + CO2 + 2 H2O. It participates in alkene biosynthesis; ethylene biosynthesis via S-adenosyl-L-methionine; ethylene from S-adenosyl-L-methionine: step 2/2. In Solanum lycopersicum (Tomato), this protein is 1-aminocyclopropane-1-carboxylate oxidase 1 (ACO1).